We begin with the raw amino-acid sequence, 206 residues long: ATP synthase subunit b (206 aa).

Residues 14–34 (VMMPAAVCAAVIGLSALGFAA) form a helical membrane-spanning segment.

This sequence belongs to the ATPase B chain family. As to quaternary structure, F-type ATPases have 2 components, F(1) - the catalytic core - and F(0) - the membrane proton channel. F(1) has five subunits: alpha(3), beta(3), gamma(1), delta(1), epsilon(1). F(0) has three main subunits: a(1), b(2) and c(10-14). The alpha and beta chains form an alternating ring which encloses part of the gamma chain. F(1) is attached to F(0) by a central stalk formed by the gamma and epsilon chains, while a peripheral stalk is formed by the delta and b chains.

It is found in the cell inner membrane. F(1)F(0) ATP synthase produces ATP from ADP in the presence of a proton or sodium gradient. F-type ATPases consist of two structural domains, F(1) containing the extramembraneous catalytic core and F(0) containing the membrane proton channel, linked together by a central stalk and a peripheral stalk. During catalysis, ATP synthesis in the catalytic domain of F(1) is coupled via a rotary mechanism of the central stalk subunits to proton translocation. Its function is as follows. Component of the F(0) channel, it forms part of the peripheral stalk, linking F(1) to F(0). The protein is ATP synthase subunit b of Geobacter metallireducens (strain ATCC 53774 / DSM 7210 / GS-15).